The chain runs to 66 residues: Large ribosomal subunit protein bL35 (66 aa).

2 stretches are compositionally biased toward basic residues: residues 1–16 and 23–45; these read MPKF…RFKK and KRGH…RQLR. Residues 1–66 form a disordered region; that stretch reads MPKFKTHRAS…RIRQMLSQMK (66 aa).

It belongs to the bacterial ribosomal protein bL35 family.

This chain is Large ribosomal subunit protein bL35, found in Lacticaseibacillus casei (strain BL23) (Lactobacillus casei).